Reading from the N-terminus, the 468-residue chain is Glutamate--tRNA ligase (468 aa).

Residues 8 to 18 (PSPTGFLHVGG) carry the 'HIGH' region motif. Residues C97, C99, C124, and D126 each coordinate Zn(2+). A 'KMSKS' region motif is present at residues 236 to 240 (KLSKR). An ATP-binding site is contributed by K239.

This sequence belongs to the class-I aminoacyl-tRNA synthetase family. Glutamate--tRNA ligase type 1 subfamily. As to quaternary structure, monomer. Requires Zn(2+) as cofactor.

Its subcellular location is the cytoplasm. It carries out the reaction tRNA(Glu) + L-glutamate + ATP = L-glutamyl-tRNA(Glu) + AMP + diphosphate. In terms of biological role, catalyzes the attachment of glutamate to tRNA(Glu) in a two-step reaction: glutamate is first activated by ATP to form Glu-AMP and then transferred to the acceptor end of tRNA(Glu). The protein is Glutamate--tRNA ligase of Francisella tularensis subsp. mediasiatica (strain FSC147).